Here is a 367-residue protein sequence, read N- to C-terminus: DNA polymerase IV (367 aa).

A UmuC domain is found at 14–198 (IIHIDMDAFF…LPIEKFHGVG (185 aa)). Residues D18 and D116 each coordinate Mg(2+). Residue E117 is part of the active site.

Belongs to the DNA polymerase type-Y family. In terms of assembly, monomer. The cofactor is Mg(2+).

It localises to the cytoplasm. It catalyses the reaction DNA(n) + a 2'-deoxyribonucleoside 5'-triphosphate = DNA(n+1) + diphosphate. In terms of biological role, poorly processive, error-prone DNA polymerase involved in untargeted mutagenesis. Copies undamaged DNA at stalled replication forks, which arise in vivo from mismatched or misaligned primer ends. These misaligned primers can be extended by PolIV. Exhibits no 3'-5' exonuclease (proofreading) activity. May be involved in translesional synthesis, in conjunction with the beta clamp from PolIII. This Streptococcus thermophilus (strain CNRZ 1066) protein is DNA polymerase IV.